A 91-amino-acid chain; its full sequence is Large ribosomal subunit protein bL31B-1 (91 aa).

The protein belongs to the bacterial ribosomal protein bL31 family. Type B subfamily. In terms of assembly, part of the 50S ribosomal subunit.

The polypeptide is Large ribosomal subunit protein bL31B-1 (Streptomyces avermitilis (strain ATCC 31267 / DSM 46492 / JCM 5070 / NBRC 14893 / NCIMB 12804 / NRRL 8165 / MA-4680)).